Consider the following 290-residue polypeptide: 33 kDa chaperonin (290 aa).

2 disulfides stabilise this stretch: Cys235-Cys237 and Cys268-Cys271.

This sequence belongs to the HSP33 family. Under oxidizing conditions two disulfide bonds are formed involving the reactive cysteines. Under reducing conditions zinc is bound to the reactive cysteines and the protein is inactive.

The protein localises to the cytoplasm. In terms of biological role, redox regulated molecular chaperone. Protects both thermally unfolding and oxidatively damaged proteins from irreversible aggregation. Plays an important role in the bacterial defense system toward oxidative stress. In Streptococcus pyogenes serotype M2 (strain MGAS10270), this protein is 33 kDa chaperonin.